The following is a 387-amino-acid chain: Succinyl-diaminopimelate desuccinylase (387 aa).

Histidine 73 lines the Zn(2+) pocket. The active site involves aspartate 75. Aspartate 106 provides a ligand contact to Zn(2+). Catalysis depends on glutamate 141, which acts as the Proton acceptor. Residues glutamate 142, glutamate 170, and histidine 359 each coordinate Zn(2+).

Belongs to the peptidase M20A family. DapE subfamily. As to quaternary structure, homodimer. Zn(2+) is required as a cofactor. The cofactor is Co(2+).

It carries out the reaction N-succinyl-(2S,6S)-2,6-diaminopimelate + H2O = (2S,6S)-2,6-diaminopimelate + succinate. The protein operates within amino-acid biosynthesis; L-lysine biosynthesis via DAP pathway; LL-2,6-diaminopimelate from (S)-tetrahydrodipicolinate (succinylase route): step 3/3. Its function is as follows. Catalyzes the hydrolysis of N-succinyl-L,L-diaminopimelic acid (SDAP), forming succinate and LL-2,6-diaminopimelate (DAP), an intermediate involved in the bacterial biosynthesis of lysine and meso-diaminopimelic acid, an essential component of bacterial cell walls. This is Succinyl-diaminopimelate desuccinylase from Methylorubrum populi (strain ATCC BAA-705 / NCIMB 13946 / BJ001) (Methylobacterium populi).